A 245-amino-acid polypeptide reads, in one-letter code: Dehydrogenase/reductase SDR family member 6 (245 aa).

NAD(+) is bound by residues 16–18, aspartate 37, and aspartate 58; that span reads QGI. Arginine 144 is a substrate binding site. Tyrosine 147 functions as the Proton acceptor in the catalytic mechanism. NAD(+) is bound by residues lysine 151 and 180–184; that span reads VDTPS. The substrate site is built by arginine 188 and arginine 205.

This sequence belongs to the short-chain dehydrogenases/reductases (SDR) family. As to quaternary structure, homotetramer.

The protein localises to the cytoplasm. The enzyme catalyses cis-4-hydroxy-L-proline + NAD(+) = 4-oxo-L-proline + NADH + H(+). It catalyses the reaction (R)-3-hydroxybutanoate + NAD(+) = acetoacetate + NADH + H(+). The protein operates within amino-acid metabolism. Its pathway is siderophore biosynthesis. In terms of biological role, NAD(H)-dependent dehydrogenase/reductase with a preference for cyclic substrates. Catalyzes stereoselective conversion of 4-oxo-L-proline to cis-4-hydroxy-L-proline, likely a detoxification mechanism for ketoprolines. Mediates the formation of 2,5-dihydroxybenzoate (2,5-DHBA), a siderophore that chelates free cytoplasmic iron, thereby regulating iron transport and homeostasis while protecting cells against free radical-induced oxidative stress. The iron-siderophore complex is imported into mitochondria, providing an iron source for mitochondrial metabolic processes in particular heme synthesis. May act as a 3-hydroxybutyrate dehydrogenase. In Aquarana catesbeiana (American bullfrog), this protein is Dehydrogenase/reductase SDR family member 6 (bdh2).